Reading from the N-terminus, the 256-residue chain is MLRIADKTFDSHLFTGTGKFASSQLMVEAIRASGSQLVTLAMKRVDLRQHNDAILAPLIEAGVTLLPNTSGAKTAEEAIFAAQLAREALGTHWLKLEIHPDARWLLPDPIETLKAAEALVKQGFVVLPYCGADPVLCKRLEEVGCAAVMPLGAPIGSNQGLETKAMLEIIIQQATVPVVVDAGIGVPSHAAQALEMGADAVLVNTAIAVADDPVMMATAFRLAVEAGLLARQAVPGNRSTYASATSPLTGFLEALA.

The active-site Schiff-base intermediate with DXP is Lys95. Residues Gly156, 182 to 183 (AG), and 204 to 205 (NT) contribute to the 1-deoxy-D-xylulose 5-phosphate site.

It belongs to the ThiG family. In terms of assembly, homotetramer. Forms heterodimers with either ThiH or ThiS.

The protein localises to the cytoplasm. The enzyme catalyses [ThiS sulfur-carrier protein]-C-terminal-Gly-aminoethanethioate + 2-iminoacetate + 1-deoxy-D-xylulose 5-phosphate = [ThiS sulfur-carrier protein]-C-terminal Gly-Gly + 2-[(2R,5Z)-2-carboxy-4-methylthiazol-5(2H)-ylidene]ethyl phosphate + 2 H2O + H(+). The protein operates within cofactor biosynthesis; thiamine diphosphate biosynthesis. Its function is as follows. Catalyzes the rearrangement of 1-deoxy-D-xylulose 5-phosphate (DXP) to produce the thiazole phosphate moiety of thiamine. Sulfur is provided by the thiocarboxylate moiety of the carrier protein ThiS. In vitro, sulfur can be provided by H(2)S. This Salmonella choleraesuis (strain SC-B67) protein is Thiazole synthase.